The primary structure comprises 77 residues: Putative antitoxin MazE7 (77 aa).

The tract at residues 49-77 (REASHAETTTQAVRDEDREWEGTVGDGLG) is disordered.

As to quaternary structure, forms a complex with cognate toxin MazF7.

Its function is as follows. Antitoxin component of a type II toxin-antitoxin (TA) system. The polypeptide is Putative antitoxin MazE7 (mazE7) (Mycobacterium tuberculosis (strain CDC 1551 / Oshkosh)).